The following is a 766-amino-acid chain: 5-methyltetrahydropteroyltriglutamate--homocysteine methyltransferase (766 aa).

5-methyltetrahydropteroyltri-L-glutamate is bound by residues 16–19 (RELK) and K124. L-homocysteine is bound by residues 445–447 (IGS) and E498. Residues 445 to 447 (IGS) and E498 each bind L-methionine. Residues 529–530 (RC) and W575 contribute to the 5-methyltetrahydropteroyltri-L-glutamate site. L-homocysteine is bound at residue D613. D613 is a binding site for L-methionine. Residue E619 coordinates 5-methyltetrahydropteroyltri-L-glutamate. Zn(2+) contacts are provided by H655, C657, and E679. Catalysis depends on H708, which acts as the Proton donor. Residue C740 coordinates Zn(2+).

The protein belongs to the vitamin-B12 independent methionine synthase family. Zn(2+) is required as a cofactor.

The catalysed reaction is 5-methyltetrahydropteroyltri-L-glutamate + L-homocysteine = tetrahydropteroyltri-L-glutamate + L-methionine. Its pathway is amino-acid biosynthesis; L-methionine biosynthesis via de novo pathway; L-methionine from L-homocysteine (MetE route): step 1/1. Catalyzes the transfer of a methyl group from 5-methyltetrahydrofolate to homocysteine resulting in methionine formation. The chain is 5-methyltetrahydropteroyltriglutamate--homocysteine methyltransferase from Pseudomonas syringae pv. tomato (strain ATCC BAA-871 / DC3000).